We begin with the raw amino-acid sequence, 194 residues long: Peptidyl-tRNA hydrolase (194 aa).

Tyr-17 serves as a coordination point for tRNA. Catalysis depends on His-22, which acts as the Proton acceptor. The tRNA site is built by Tyr-69, Asn-71, and Asn-117.

It belongs to the PTH family. As to quaternary structure, monomer.

Its subcellular location is the cytoplasm. The catalysed reaction is an N-acyl-L-alpha-aminoacyl-tRNA + H2O = an N-acyl-L-amino acid + a tRNA + H(+). Functionally, hydrolyzes ribosome-free peptidyl-tRNAs (with 1 or more amino acids incorporated), which drop off the ribosome during protein synthesis, or as a result of ribosome stalling. Catalyzes the release of premature peptidyl moieties from peptidyl-tRNA molecules trapped in stalled 50S ribosomal subunits, and thus maintains levels of free tRNAs and 50S ribosomes. In Paenarthrobacter aurescens (strain TC1), this protein is Peptidyl-tRNA hydrolase.